The following is a 95-amino-acid chain: Aspartyl/glutamyl-tRNA(Asn/Gln) amidotransferase subunit C (95 aa).

Belongs to the GatC family. Heterotrimer of A, B and C subunits.

The enzyme catalyses L-glutamyl-tRNA(Gln) + L-glutamine + ATP + H2O = L-glutaminyl-tRNA(Gln) + L-glutamate + ADP + phosphate + H(+). It carries out the reaction L-aspartyl-tRNA(Asn) + L-glutamine + ATP + H2O = L-asparaginyl-tRNA(Asn) + L-glutamate + ADP + phosphate + 2 H(+). Functionally, allows the formation of correctly charged Asn-tRNA(Asn) or Gln-tRNA(Gln) through the transamidation of misacylated Asp-tRNA(Asn) or Glu-tRNA(Gln) in organisms which lack either or both of asparaginyl-tRNA or glutaminyl-tRNA synthetases. The reaction takes place in the presence of glutamine and ATP through an activated phospho-Asp-tRNA(Asn) or phospho-Glu-tRNA(Gln). The polypeptide is Aspartyl/glutamyl-tRNA(Asn/Gln) amidotransferase subunit C (Ectopseudomonas mendocina (strain ymp) (Pseudomonas mendocina)).